A 759-amino-acid chain; its full sequence is MKPLKLELNPRDFNHYQAAFLPYRMKIKQPLHVLCFSVCSLSAVAQETCPAPANTFVVEKRLPNGQIQVISNMTSIQQDNFAEFEGDVEITNKDSQIIANKAQIDRTTQQLIATGDVSYQNPQLSVTSQKVLLNTQNNRMEIADTQYELTTLNARGQAELLVVDQTQGLELNGVTFSTCPTGQEDWLVHADSITVKPDETRGVARNAFFYVQDIPIFYLPYYSFPVTDARETGLLFPQVGSSSSTGFAYEQPYYLNLDPQYDATITPRYMTKRGLQLKTEFRYLTENNSGQIDIEYLPNDSDSTTNEDRYFYRFTHKGALSDDWEVNVDFNGLSDDNYIVDLGSDYYNSADTHLFRTLGLHYYSDALNVSLQLRDFEILGDHDDTYRALPELKLDYVTDLPAGFKFDIHSELARFDNANGTSPKATRAHIAPTLSLPLENSWGEFLAETSIMHTVYRQEDIEGTDLSRDVSRTLGQAKLYGALVFERQAHWFGDNVTQTLEPRAQYLYTSYEDQSDIGLYDTTRLFNDFAGLFRGQEFTGLDRISDKNQVTLGVTSRIIDEDNREQFKLSLGQIFYLEDNKVTAASKEDDRSALAAELDWRIGSKWLAHSEVQVSTQTDKVERSSVGLEYRLARDKMLQINHRFVRDLSGEQISQLGLTASWPIAQDWYWVGRWYRDIDRHRTIESYTGLQYESCCWALRIVAQRQLTSRFDDDGLQSTDEFDSGIAIQFLFKGIGGDSSGRDMLRDGLFGYRQPYLLD.

The first 45 residues, 1 to 45 (MKPLKLELNPRDFNHYQAAFLPYRMKIKQPLHVLCFSVCSLSAVA), serve as a signal peptide directing secretion.

The protein belongs to the LptD family. In terms of assembly, component of the lipopolysaccharide transport and assembly complex. Interacts with LptE and LptA.

The protein localises to the cell outer membrane. Together with LptE, is involved in the assembly of lipopolysaccharide (LPS) at the surface of the outer membrane. The sequence is that of LPS-assembly protein LptD from Pseudoalteromonas atlantica (strain T6c / ATCC BAA-1087).